We begin with the raw amino-acid sequence, 144 residues long: Universal stress protein F (144 aa).

Belongs to the universal stress protein A family. Homodimer.

The protein is Universal stress protein F (uspF) of Escherichia coli O157:H7.